The sequence spans 188 residues: Large ribosomal subunit protein eL18B (188 aa).

The tract at residues glycine 153–asparagine 188 is disordered. The span at arginine 178–asparagine 188 shows a compositional bias: basic residues.

It belongs to the eukaryotic ribosomal protein eL18 family. In terms of assembly, component of the large ribosomal subunit.

The protein localises to the cytoplasm. It localises to the cytosol. Its subcellular location is the rough endoplasmic reticulum. Its function is as follows. Component of the large ribosomal subunit. The ribosome is a large ribonucleoprotein complex responsible for the synthesis of proteins in the cell. This is Large ribosomal subunit protein eL18B (rpl18-b) from Xenopus laevis (African clawed frog).